The sequence spans 1244 residues: Putative late blight resistance protein homolog R1A-4 (1244 aa).

Coiled coils occupy residues 411–434 (RYSDSLAFLKNQLQVIQTEFESLQ) and 526–548 (PRMNEEIVGFKDVIENLRNQLLN). Residues 527–755 (RMNEEIVGFK…ECWEQVANDL (229 aa)) form the NB-ARC domain. Position 560–567 (560–567 (GMPGLGKT)) interacts with ATP. LRR repeat units lie at residues 978–1004 (LWNLETLILNRRSVVHKILLPSTVWDM), 1079–1103 (PIRLEILKLYRSNAFKAIPFCISAP), 1127–1150 (LKNLEVLKLYYVEFGDHREWKVSN), 1153–1178 (FPQLKILKLEDVSLMKWIVADDAFPN), and 1213–1237 (ESVVKSAMNIQETQVEDYQNTNFKL).

This sequence belongs to the disease resistance NB-LRR family.

The protein localises to the cytoplasm. Its subcellular location is the membrane. Confers resistance to late blight (Phytophthora infestans) races carrying the avirulence gene Avr1. Resistance proteins guard the plant against pathogens that contain an appropriate avirulence protein via an indirect interaction with this avirulence protein. That triggers a defense system including the hypersensitive response, which restricts the pathogen growth. This is Putative late blight resistance protein homolog R1A-4 (R1A-4) from Solanum demissum (Wild potato).